A 393-amino-acid polypeptide reads, in one-letter code: Sister chromatid cohesion protein DCC1 (393 aa).

This sequence belongs to the DCC1 family. In terms of assembly, component of the CTF18-RFC complex which consists of CTF8, CTF18, DSCC1 and the RFC complex. Interacts with CTF8 and CTF18. Interacts with DDX11.

It is found in the nucleus. Functionally, loads PCNA onto primed templates regulating velocity, spacing and restart activity of replication forks. May couple DNA replication to sister chromatid cohesion through regulation of the acetylation of the cohesin subunit SMC3. The polypeptide is Sister chromatid cohesion protein DCC1 (DSCC1) (Homo sapiens (Human)).